Here is a 570-residue protein sequence, read N- to C-terminus: Periplasmic trehalase (570 aa).

The N-terminal stretch at Met-1 to Ala-34 is a signal peptide. Substrate contacts are provided by residues Arg-159, Trp-166–Asp-167, Asn-203, Arg-212–Gln-214, Arg-284–Glu-286, and Gly-317. Catalysis depends on proton donor/acceptor residues Asp-319 and Glu-503. Glu-518 is a binding site for substrate. The interval Lys-544–Gln-570 is disordered. The span at Pro-554–Gln-570 shows a compositional bias: low complexity.

This sequence belongs to the glycosyl hydrolase 37 family. As to quaternary structure, monomer.

Its subcellular location is the periplasm. The enzyme catalyses alpha,alpha-trehalose + H2O = alpha-D-glucose + beta-D-glucose. Its function is as follows. Provides the cells with the ability to utilize trehalose at high osmolarity by splitting it into glucose molecules that can subsequently be taken up by the phosphotransferase-mediated uptake system. The sequence is that of Periplasmic trehalase from Salmonella paratyphi B (strain ATCC BAA-1250 / SPB7).